Consider the following 354-residue polypeptide: MYECIQDYLTNHKDEKNIYVNKCISIVGSPLSAGQSLSGVNKACDNLRKFGLHDVIKAVGWGYEDIGNIGEKIPINGFLKQENIEKENDQINNNNPSYYNNIKNAEVIGKFSEKLFQTMSSELKKKNFILNIGGDHGVAFSSILSMLQTYNNLKVIWIDAHGDINIPETSPSGNYHGMSLAHALGLFKKKVPYFEWSEKLLHLKPENVAIIGIRDIDKYEKIILKKCNINYYTMFDIDKKGIYNIICEALNKIDPNKNSPIHISLDIDSVDSIYAPGTGTIAKGGLNYREIHLLIKSISDTKRVVSMDIVEYNPLLDESDKAVHGDSLPIDPNATKTGKLCLELIARVLGNDIV.

Residues H136, D159, H161, and D163 each contribute to the Mn(2+) site. L-arginine-binding residues include N165, S172, and D217. Mn(2+)-binding residues include D266 and D268.

It belongs to the arginase family. As to quaternary structure, homotrimer; oligomerization is dependent on Mn(2+) binding. It depends on Mn(2+) as a cofactor.

The catalysed reaction is L-arginine + H2O = urea + L-ornithine. It participates in nitrogen metabolism; urea cycle; L-ornithine and urea from L-arginine: step 1/1. Catalyzes the hydrolysis of L-arginine into urea and L-ornithine, which is a precursor for polyamine biosynthesis. May play a role in parasite intra-hepatic development during the host liver stage. The polypeptide is Arginase (Plasmodium berghei (strain Anka)).